Reading from the N-terminus, the 176-residue chain is Telomerase RNA component interacting RNase (176 aa).

Basic and acidic residues predominate over residues M1–G12. The disordered stretch occupies residues M1–G121. Over residues S45 to V56 the composition is skewed to low complexity. Residues L68–E83 are compositionally biased toward basic and acidic residues. Positions R90–G101 are enriched in low complexity. K146 is subject to N6-acetyllysine.

Part of the telomerase RNA 3' end complex which contains about 488 proteins.

With respect to regulation, zn(2+) inhibits the RNase activity while Mg(2+), Ca(2+), Mn(2+), K(+), Na(+), EDTA and EGTA show little effect on the exoribonuclease activity. In terms of biological role, exoribonuclease that is part of the telomerase RNA 3' end processing complex and which has the ability to cleave all four unpaired RNA nucleotides from the 5' end or 3' end with higher efficiency for purine bases. The sequence is that of Telomerase RNA component interacting RNase from Homo sapiens (Human).